The following is a 398-amino-acid chain: Phosphoglycerate kinase (398 aa).

Substrate contacts are provided by residues 21–23 (DFN), Arg36, 59–62 (HLGR), Arg119, and Arg157. Residues Lys208, Gly296, Glu327, and 354 to 357 (GGDS) each bind ATP.

It belongs to the phosphoglycerate kinase family. Monomer.

Its subcellular location is the cytoplasm. The enzyme catalyses (2R)-3-phosphoglycerate + ATP = (2R)-3-phospho-glyceroyl phosphate + ADP. It participates in carbohydrate degradation; glycolysis; pyruvate from D-glyceraldehyde 3-phosphate: step 2/5. This chain is Phosphoglycerate kinase (pgk), found in Streptococcus pyogenes serotype M1.